Consider the following 1029-residue polypeptide: Endosome/lysosome-associated apoptosis and autophagy regulator family member 2 (1029 aa).

The N-terminal stretch at 1–47 (MLFRARGPVRGRGWGRPAEAPRRGRSPPWSPAWICCWALAGCQAAWA) is a signal peptide. At 48-929 (GDLPSSSSRP…TCETVDFWLK (882 aa)) the chain is on the extracellular side. Asn169 is a glycosylation site (N-linked (GlcNAc...) asparagine). 3 disulfide bridges follow: Cys293-Cys310, Cys323-Cys346, and Cys326-Cys358. Residues Asn405 and Asn691 are each glycosylated (N-linked (GlcNAc...) asparagine). In terms of domain architecture, MRH spans 672–877 (SDCFFYHEKE…LWESAEACPL (206 aa)). Intrachain disulfides connect Cys674–Cys720, Cys730–Cys758, Cys827–Cys863, and Cys839–Cys875. The helical transmembrane segment at 930 to 950 (VGAGVGAFTAVLLVALTCYFW) threads the bilayer. The Cytoplasmic segment spans residues 951 to 1029 (KKNQKLEYKY…QLKTSRSPNI (79 aa)). Ser1018 carries the post-translational modification Phosphoserine.

The protein belongs to the ELAPOR family.

Its subcellular location is the cell membrane. Its function is as follows. Functions as a regulator of the BMP signaling pathway and may be involved in epidermal differentiation. The chain is Endosome/lysosome-associated apoptosis and autophagy regulator family member 2 from Homo sapiens (Human).